A 239-amino-acid polypeptide reads, in one-letter code: Orotidine 5'-phosphate decarboxylase (239 aa).

Substrate contacts are provided by residues D11, K33, 60–69 (DLKCHDIPTT), T123, R185, Q194, G214, and R215. The Proton donor role is filled by K62.

This sequence belongs to the OMP decarboxylase family. Type 1 subfamily. In terms of assembly, homodimer.

It catalyses the reaction orotidine 5'-phosphate + H(+) = UMP + CO2. The protein operates within pyrimidine metabolism; UMP biosynthesis via de novo pathway; UMP from orotate: step 2/2. Its function is as follows. Catalyzes the decarboxylation of orotidine 5'-monophosphate (OMP) to uridine 5'-monophosphate (UMP). This Bacillus licheniformis (strain ATCC 14580 / DSM 13 / JCM 2505 / CCUG 7422 / NBRC 12200 / NCIMB 9375 / NCTC 10341 / NRRL NRS-1264 / Gibson 46) protein is Orotidine 5'-phosphate decarboxylase.